The chain runs to 371 residues: Dual-specificity RNA methyltransferase RlmN (371 aa).

Glu99 (proton acceptor) is an active-site residue. A Radical SAM core domain is found at 106–333; the sequence is DDNRATLCIS…AIRRASKGQD (228 aa). A disulfide bridge connects residues Cys113 and Cys338. Residues Cys120, Cys124, and Cys127 each coordinate [4Fe-4S] cluster. S-adenosyl-L-methionine is bound by residues 165 to 166, Ser197, 219 to 221, and Asn295; these read GE and SLN. Cys338 (S-methylcysteine intermediate) is an active-site residue. The segment at 345–371 is disordered; the sequence is LTVSPPAQESERNSARPDRSQGKGKHL. Residues 353–365 show a composition bias toward basic and acidic residues; the sequence is ESERNSARPDRSQ.

This sequence belongs to the radical SAM superfamily. RlmN family. [4Fe-4S] cluster is required as a cofactor.

It is found in the cytoplasm. It carries out the reaction adenosine(2503) in 23S rRNA + 2 reduced [2Fe-2S]-[ferredoxin] + 2 S-adenosyl-L-methionine = 2-methyladenosine(2503) in 23S rRNA + 5'-deoxyadenosine + L-methionine + 2 oxidized [2Fe-2S]-[ferredoxin] + S-adenosyl-L-homocysteine. It catalyses the reaction adenosine(37) in tRNA + 2 reduced [2Fe-2S]-[ferredoxin] + 2 S-adenosyl-L-methionine = 2-methyladenosine(37) in tRNA + 5'-deoxyadenosine + L-methionine + 2 oxidized [2Fe-2S]-[ferredoxin] + S-adenosyl-L-homocysteine. Functionally, specifically methylates position 2 of adenine 2503 in 23S rRNA and position 2 of adenine 37 in tRNAs. m2A2503 modification seems to play a crucial role in the proofreading step occurring at the peptidyl transferase center and thus would serve to optimize ribosomal fidelity. This chain is Dual-specificity RNA methyltransferase RlmN, found in Syntrophotalea carbinolica (strain DSM 2380 / NBRC 103641 / GraBd1) (Pelobacter carbinolicus).